We begin with the raw amino-acid sequence, 912 residues long: Multiple C2 and transmembrane domain-containing protein (912 aa).

Low complexity predominate over residues 1–33 (MSRIQYVDQVDQVELDQQQQPGSSSTVSGSTPP). Disordered regions lie at residues 1–80 (MSRI…KRAK) and 145–165 (SSEGSSVTHSPRHRSTTIGGS). The segment covering 38–49 (PHGSPSLQQSQR) has biased composition (polar residues). C2 domains follow at residues 218 to 337 (QANE…HLQL), 371 to 493 (RNSK…HLML), and 522 to 637 (ERYK…TLKD). Residues Asp-252, Asp-258, Asp-305, Asp-307, and Asp-313 each contribute to the Ca(2+) site. Ca(2+) contacts are provided by Asp-553, Asp-559, Asp-605, and Asp-607. Transmembrane regions (helical) follow at residues 729–749 (IVACVYGDLETVPLVLLLIIL) and 826–846 (LTWLAVVLLLGAILVLHFVPL). Residues 887–912 (NQYRELPPSAPTDQTRNNPKKKLKGS) form a disordered region.

Ca(2+) is required as a cofactor. As to expression, motor neurons (at protein level).

The protein localises to the endoplasmic reticulum membrane. Its function is as follows. Calcium sensor which is essential for the stabilization of normal baseline neurotransmitter release and for the induction and long-term maintenance of presynaptic homeostatic plasticity. In Drosophila melanogaster (Fruit fly), this protein is Multiple C2 and transmembrane domain-containing protein.